The sequence spans 159 residues: ATP synthase subunit b (159 aa).

The chain crosses the membrane as a helical span at residues 7 to 27; sequence DFIWTLINFFVLLFILKILLY.

The protein belongs to the ATPase B chain family. F-type ATPases have 2 components, F(1) - the catalytic core - and F(0) - the membrane proton channel. F(1) has five subunits: alpha(3), beta(3), gamma(1), delta(1), epsilon(1). F(0) has three main subunits: a(1), b(2) and c(10-14). The alpha and beta chains form an alternating ring which encloses part of the gamma chain. F(1) is attached to F(0) by a central stalk formed by the gamma and epsilon chains, while a peripheral stalk is formed by the delta and b chains.

The protein resides in the cell membrane. Its function is as follows. F(1)F(0) ATP synthase produces ATP from ADP in the presence of a proton or sodium gradient. F-type ATPases consist of two structural domains, F(1) containing the extramembraneous catalytic core and F(0) containing the membrane proton channel, linked together by a central stalk and a peripheral stalk. During catalysis, ATP synthesis in the catalytic domain of F(1) is coupled via a rotary mechanism of the central stalk subunits to proton translocation. In terms of biological role, component of the F(0) channel, it forms part of the peripheral stalk, linking F(1) to F(0). In Carboxydothermus hydrogenoformans (strain ATCC BAA-161 / DSM 6008 / Z-2901), this protein is ATP synthase subunit b.